Reading from the N-terminus, the 371-residue chain is MAFKKLLAVLTAALSLRAAQGAAVEKRATCSNGKVVPAASCCTWFNVLSDIQENLFNGGQCGAEAHESIRLVFHDAIAISPAMEPQASSVRGADGSIMIFDEIETNFHPNIGLDEIVRLQKPFVQKHGVTPGDFIAFAGAVALSNCPGAPQMNFFTGRAPATQPAPDGLVPEPFHSVDQIIDRVFDAGEFDELELVWMLSAHSVAAANDIDPNIQGLPFDSTPGIFDSQFFVETQLAGTGFTGGSNNQGEVSSPLPGEMRLQSDFLIARDARTACEWQSFVNNQSKLVSDFQFIFLALTQLGQDPDAMTDCSAVIPISKPAPNNTPGFSFFPPGMTMDDVEQACAETPFPTLSTLPGPATSVARIPPPPGA.

A signal peptide spans 1 to 21 (MAFKKLLAVLTAALSLRAAQG). Residues 22-27 (AAVEKR) constitute a propeptide that is removed on maturation. 4 cysteine pairs are disulfide-bonded: cysteine 30–cysteine 42, cysteine 41–cysteine 311, cysteine 61–cysteine 146, and cysteine 275–cysteine 344. The active-site Proton acceptor is the histidine 74. Positions 75, 92, 94, and 96 each coordinate Ca(2+). Histidine 202 contacts heme b. Ca(2+) contacts are provided by serine 203, aspartate 220, threonine 222, isoleucine 225, and aspartate 227. Residue asparagine 283 is glycosylated (N-linked (GlcNAc...) asparagine). The segment at 349 to 371 (FPTLSTLPGPATSVARIPPPPGA) is disordered.

This sequence belongs to the peroxidase family. Ligninase subfamily. It depends on Ca(2+) as a cofactor. Requires heme b as cofactor.

It catalyses the reaction 1-(3,4-dimethoxyphenyl)-2-(2-methoxyphenoxy)propane-1,3-diol + H2O2 = 3,4-dimethoxybenzaldehyde + guaiacol + glycolaldehyde + H2O. It carries out the reaction 2 (3,4-dimethoxyphenyl)methanol + H2O2 = 2 (3,4-dimethoxyphenyl)methanol radical + 2 H2O. It participates in secondary metabolite metabolism; lignin degradation. Depolymerization of lignin. Catalyzes the C(alpha)-C(beta) cleavage of the propyl side chains of lignin. The sequence is that of Ligninase LG5 (GLG5) from Phanerodontia chrysosporium (White-rot fungus).